The chain runs to 338 residues: Egl nine homolog 1 (338 aa).

Low complexity predominate over residues 1 to 11; it reads PRAQPAPAQPR. Positions 1–99 are disordered; the sequence is PRAQPAPAQP…PSGGLRPNGQ (99 aa). At Ser-52 the chain carries Phosphoserine. Residues Cys-116 and Cys-123 each carry the S-nitrosocysteine modification. The interval 156–166 is beta(2)beta(3) 'finger-like' loop; that stretch reads VSQKSDSSKDI. A Fe2OG dioxygenase domain is found at 209 to 307; that stretch reads GRTKAMVACY…RYAITVWYFD (99 aa). The residue at position 217 (Cys-217) is an S-nitrosocysteine. 2 residues coordinate Fe cation: His-228 and Asp-230. Residues Cys-238 and Cys-241 each carry the S-nitrosocysteine modification. His-289 lines the Fe cation pocket. Arg-298 serves as a coordination point for 2-oxoglutarate.

In terms of assembly, monomer. Interacts with ING4; the interaction inhibits the hydroxylation of HIF alpha proteins. Interacts with PTGES3 (via PXLE motif); thereby recruiting EGLN1 to the HSP90 pathway to facilitate HIF alpha proteins hydroxylation. Interacts with LIMD1. Found in a complex composed of LIMD1, VHL, EGLN1/PHD2, ELOB and CUL2. Interacts with EPAS1. Interacts with CBFA2T3 and HIF1A. Fe(2+) serves as cofactor. The cofactor is L-ascorbate. In terms of processing, S-nitrosylation inhibits the enzyme activity up to 60% under aerobic conditions. Chelation of Fe(2+) has no effect on the S-nitrosylation. It is uncertain whether nitrosylation occurs on Cys-238 or Cys-241. Expressed in heart, liver, kidney, brain, liver and testis. Highest levels in heart, lowest in liver.

Its subcellular location is the cytoplasm. The protein resides in the nucleus. It catalyses the reaction L-prolyl-[hypoxia-inducible factor alpha subunit] + 2-oxoglutarate + O2 = trans-4-hydroxy-L-prolyl-[hypoxia-inducible factor alpha subunit] + succinate + CO2. Its activity is regulated as follows. Increased activation in hypoxia. Hydroxylation of the C-terminal ODD domain (CODD) proline of HIF1A is activated by cyclosporin A (CsA). In terms of biological role, cellular oxygen sensor that catalyzes, under normoxic conditions, the post-translational formation of 4-hydroxyproline in hypoxia-inducible factor (HIF) alpha proteins. Hydroxylates a specific proline found in each of the oxygen-dependent degradation (ODD) domains (N-terminal, NODD, and C-terminal, CODD) of HIF1A. Also hydroxylates HIF2A. Has a preference for the CODD site for both HIF1A and HIF1B. Hydroxylated HIFs are then targeted for proteasomal degradation via the von Hippel-Lindau ubiquitination complex. Under hypoxic conditions, the hydroxylation reaction is attenuated allowing HIFs to escape degradation resulting in their translocation to the nucleus, heterodimerization with HIF1B, and increased expression of hypoxy-inducible genes. EGLN1 is the most important isozyme under normoxia and, through regulating the stability of HIF1, involved in various hypoxia-influenced processes such as angiogenesis in retinal and cardiac functionality. Target proteins are preferentially recognized via a LXXLAP motif. The polypeptide is Egl nine homolog 1 (Egln1) (Rattus norvegicus (Rat)).